A 308-amino-acid polypeptide reads, in one-letter code: Adipolin (308 aa).

The N-terminal stretch at 1 to 21 is a signal peptide; that stretch reads MWAWGWAAAALLWLQTAGAGA. The disordered stretch occupies residues 36–119; the sequence is DSPNITTSNR…PPGSPGVGVT (84 aa). The N-linked (GlcNAc...) asparagine glycan is linked to N39. The span at 82–93 shows a compositional bias: basic residues; the sequence is RKRCRGRDKKSR. Positions 99–113 are enriched in pro residues; the sequence is PGPPGPPGPPGPPGS. The C1q domain occupies 153–308; that stretch reads QRLVVEAFYC…SSFSGMLLGT (156 aa).

It belongs to the adipolin/erythroferrone family. As to quaternary structure, homomultimer; disulfide-linked. Adipolin fC1QTNF12: homotrimer; disulfide-linked. Adipolin gC1QTNF12: homodimer; disulfide-linked. May interact with ERFE. Post-translationally, processed into Adipolin fC1QTNF12 and Adipolin gC1QTNF12 by FURIN. Insulin enhances endogenous C1QTNF12 cleavage. Widely expressed, with high expression in subcutaneous and epididymal white adipose tissues and brown adipose tissue. Expressed in adipocytes (at protein level).

Its subcellular location is the secreted. Functionally, insulin-sensitizing adipocyte-secreted protein (adipokine) that regulates glucose metabolism in liver and adipose tissue. Promotes glucose uptake in adipocytes and suppresses de novo glucose production in hepatocytes via the PI3K-Akt signaling pathway. Administration lead to reduction of blood glucose. Able to attenuate inflammation in fat tissue. Acts by activating the Akt signaling in hepatocytes and adipocytes. Not able to increase insulin-stimulated glucose uptake in adipocytes. Its function is as follows. Acts by activating the MAP kinase. Increases insulin-stimulated glucose uptake in adipocytes. The polypeptide is Adipolin (C1qtnf12) (Mus musculus (Mouse)).